The primary structure comprises 95 residues: YcgL domain-containing protein APJL_0712 (95 aa).

Positions 4–88 constitute a YcgL domain; it reads HLCAIYKSPK…PPENLLKTFL (85 aa).

The chain is YcgL domain-containing protein APJL_0712 from Actinobacillus pleuropneumoniae serotype 3 (strain JL03).